A 547-amino-acid polypeptide reads, in one-letter code: Membrane protein insertase YidC (547 aa).

6 consecutive transmembrane segments (helical) span residues 6–26 (LILVLIFTFSSFMLWENWQKY), 328–348 (VVDYGWLTVVAAPIFWALEAI), 351–371 (LVGNWGWAIVVLTIMIKAVFF), 425–445 (LPILVQIPVFIALYWVLLGAV), 459–479 (LASADPYYILPVIMMVSMFVQ), and 499–519 (PLIFGFMFFWFPAGLVLYWVV).

The protein belongs to the OXA1/ALB3/YidC family. Type 1 subfamily. As to quaternary structure, interacts with the Sec translocase complex via SecD. Specifically interacts with transmembrane segments of nascent integral membrane proteins during membrane integration.

The protein resides in the cell inner membrane. Required for the insertion and/or proper folding and/or complex formation of integral membrane proteins into the membrane. Involved in integration of membrane proteins that insert both dependently and independently of the Sec translocase complex, as well as at least some lipoproteins. Aids folding of multispanning membrane proteins. The protein is Membrane protein insertase YidC of Dechloromonas aromatica (strain RCB).